The chain runs to 92 residues: UPF0250 protein XOO3732 (92 aa).

Belongs to the UPF0250 family.

In Xanthomonas oryzae pv. oryzae (strain MAFF 311018), this protein is UPF0250 protein XOO3732.